A 626-amino-acid chain; its full sequence is Chaperone protein HtpG (626 aa).

The segment at 1 to 341 is a; substrate-binding; the sequence is METKQFKAES…SEDLSLNISR (341 aa). The interval 342-552 is b; it reads EILQHDRQLK…EGELSIEMEK (211 aa). Residues 553–626 are c; that stretch reads VLNAMPNNQN…FTNNICKIMK (74 aa).

The protein belongs to the heat shock protein 90 family. As to quaternary structure, homodimer.

It localises to the cytoplasm. Its function is as follows. Molecular chaperone. Has ATPase activity. The chain is Chaperone protein HtpG from Clostridium botulinum (strain 657 / Type Ba4).